Consider the following 347-residue polypeptide: Protein RecA (347 aa).

Residue 67-74 coordinates ATP; sequence GPESSGKT.

This sequence belongs to the RecA family.

It is found in the cytoplasm. Its function is as follows. Can catalyze the hydrolysis of ATP in the presence of single-stranded DNA, the ATP-dependent uptake of single-stranded DNA by duplex DNA, and the ATP-dependent hybridization of homologous single-stranded DNAs. It interacts with LexA causing its activation and leading to its autocatalytic cleavage. The protein is Protein RecA of Helicobacter pylori (strain G27).